Reading from the N-terminus, the 140-residue chain is MTNRTIIAFDFGTKSIGAAIGQELTGSARALAAFKAQDGSPDWQKIEKLLKEWQPDLVVVGLPLNMDGTEQLVTEQARKFANRLHGRFGVQIALHDERLSTVEARANLFDRGGFRALDKGSVDSASAVVILESWFERQLG.

Belongs to the YqgF nuclease family.

It localises to the cytoplasm. Could be a nuclease involved in processing of the 5'-end of pre-16S rRNA. This chain is Putative pre-16S rRNA nuclease, found in Serratia proteamaculans (strain 568).